A 114-amino-acid chain; its full sequence is Lectin MVL (114 aa).

Repeat 1 spans residues A2–V55. A carbohydrate is bound by residues P12–N16, Q20, and G36–S44. Positions E56–I60 are linker. The stretch at H61–F114 is repeat 2. Residues P71–N75, Q79, and G95–G103 contribute to the a carbohydrate site.

Homodimer.

Its subcellular location is the cytoplasm. Its function is as follows. Carbohydrate-binding protein that binds oligomannosides such as Man(6)GlcNAc(2) with sub-micromolar affinities. The specificity of MVL is unique in that its minimal target comprises the Man-alpha-(1-&gt;6)-Man-beta-(1-&gt;4)-GlcNAc-beta-(1-&gt;4)-GlcNAc tetrasaccharide core (Man(2)A) found in N-linked oligomannosides. Displays hemagglutininating activity on rabbit, horse and hen erythrocytes. This activity is inhibited by yeast mannan. Does not bind mono- and disaccharides. Inhibits HIV-1 envelope-mediated cell fusion at nanomolar concentrations through carbohydrate-mediated interactions with high-mannose residues on the surface of the HIV envelope glycoprotein gp120. Unexpectedly for a lectin, one of the 2 oligomannose binding sites of MVL can catalyze the cleavage of chitin fragments (such as chitotriose, i.e. GlcNAc(3) or GlcNAc-beta-(1-&gt;4)-GlcNAcbeta-(1-&gt;4)-GlcNAc, and chitotetraose, i.e. GlcNAc(4)) to GlcNAc. This weak beta-1,4-glycosidase activity is restricted to the C-terminal carbohydrate-binding site. Does not cleave Man(3)GlcNAc(2) or the tetrasaccharide Man(2)A. This chain is Lectin MVL (mvl), found in Microcystis viridis (Polycystis viridis).